The sequence spans 148 residues: MANFIKPYNDDPFVGHLATPITSSSLTRALLKNLPAYRFGLTPLLRGLEIGLAHGYFLIGPFAQLGPLRNSDIGLLAGFLSTIGLILILTLGLTIYGAAAFGQEKSNGSELQTKKSWDQFKGGFFVGACGSAGFAFICLSSIPTFALN.

The next 3 membrane-spanning stretches (helical) occupy residues L48–L68, I73–L93, and G122–I142.

The protein belongs to the PsaL family.

It localises to the plastid. It is found in the chloroplast thylakoid membrane. In Thalassiosira pseudonana (Marine diatom), this protein is Photosystem I reaction center subunit XI.